Here is a 192-residue protein sequence, read N- to C-terminus: Holliday junction branch migration complex subunit RuvA (192 aa).

Positions 1–64 (MIGRLTGILA…EDGHYLYGFL (64 aa)) are domain I. A domain II region spans residues 65–143 (TEAERFAFRQ…DATGVSLHPA (79 aa)). Residues 144–149 (VDDSKQ) are flexible linker. The domain III stretch occupies residues 149-192 (QDISNALLALGYNEKEAASAMKQLPADVSTSDGIRAALKLLSKV).

It belongs to the RuvA family. Homotetramer. Forms an RuvA(8)-RuvB(12)-Holliday junction (HJ) complex. HJ DNA is sandwiched between 2 RuvA tetramers; dsDNA enters through RuvA and exits via RuvB. An RuvB hexamer assembles on each DNA strand where it exits the tetramer. Each RuvB hexamer is contacted by two RuvA subunits (via domain III) on 2 adjacent RuvB subunits; this complex drives branch migration. In the full resolvosome a probable DNA-RuvA(4)-RuvB(12)-RuvC(2) complex forms which resolves the HJ.

Its subcellular location is the cytoplasm. Functionally, the RuvA-RuvB-RuvC complex processes Holliday junction (HJ) DNA during genetic recombination and DNA repair, while the RuvA-RuvB complex plays an important role in the rescue of blocked DNA replication forks via replication fork reversal (RFR). RuvA specifically binds to HJ cruciform DNA, conferring on it an open structure. The RuvB hexamer acts as an ATP-dependent pump, pulling dsDNA into and through the RuvAB complex. HJ branch migration allows RuvC to scan DNA until it finds its consensus sequence, where it cleaves and resolves the cruciform DNA. In Dechloromonas aromatica (strain RCB), this protein is Holliday junction branch migration complex subunit RuvA.